The sequence spans 181 residues: uncharacterized protein (181 aa).

Residues 133–153 (MCVCVHVCACVYVCMCVLVCM) traverse the membrane as a helical segment.

It localises to the membrane. This is an uncharacterized protein from Homo sapiens (Human).